The primary structure comprises 482 residues: Early growth response protein 4 (482 aa).

The interval Asp274–Arg357 is disordered. Positions Glu280–Ser290 are enriched in low complexity. The span at Gly291–Phe302 shows a compositional bias: gly residues. Positions Pro337 to Pro349 are enriched in pro residues. C2H2-type zinc fingers lie at residues Phe376–His400, Phe406–His428, and Phe434–His456.

This sequence belongs to the EGR C2H2-type zinc-finger protein family. In terms of tissue distribution, expressed in brain. In the cerebellum and frontal cortex.

Its subcellular location is the nucleus. Its function is as follows. Transcriptional regulator. Recognizes and binds to the DNA sequence 5'-GCGGGGGCG-3' (GSG). Activates the transcription of target genes whose products are required for mitogenesis and differentiation. In Bos taurus (Bovine), this protein is Early growth response protein 4 (EGR4).